The sequence spans 1409 residues: MRINRWIWWATVILLYLRTGLAADFFRSSEENDRKSSDDLDNFNSTKIEPDKPKTAKELGVKSCESNQDCVHDGVCHRGNDGHGICMCPRSCPAITPKQCGYNYRTPSTCLLMDADYRSKYDVKEPTCYSRKCVCPPQFDDVHVTANQKPLRLNSTLLPTKCDKRDLAVVARAHPSTSVSKGIDVTLFCCINVDPEGFIDVASVFFIQNGTIMREATSHPFAPRNGLARRVHEKYSCWELEIKNAQTSDSGSYMCRVTASASDLDVTDTMQFEVKAPRQIKNLTVNPSERDAIVTWESEGGEDMAIDLRLVRRTDTRGQVVFSKDNLTSPVSIKDLRAATPYTLFVSGNNGQVPFEFTEHFTTKQKRPFPPKEEDVRVLNSGSALSCEVEWKSPAEPNGRITKYFVSVRGAMRKSDGSLTPDDLPAAVEVDKRCANWDGDENTSKHNGINPIDFANEFYSCKFGPLKPNRNYTVTVWAENSAGRSLPAVFHKNCVTNYAQPDMVETPQPLLSNNHSTFSLTFPQPPDDINGPISCYYIAIVPLPANVSLDILPKSEEIVMHSFSKVFTNNLLPSSAEEKRFFAYIAESYVQLPEETTIGDGVRVSDLKACNVQYLSRYSSEDLALRRGLKYTGFLIVRVDKEEELNRKDVRNGADPNIFRNLIDKSVSPTSRTRTASPMSRHLRQLHLSGPAYGYSAYFKPILLDTESSSSGFGIFMKIILPFLLFLAFATGVTMFFVNRKGHMLSTWCPLFTKMTSKDVVERTLLKQTFGAIPVDDLPTEYVVRHRDTDFLFAQEYESLPHFQLDTVASNRKENAIKNRYNDIRAFDDTRVKLKKINGDDYSDYINANFIKSWKEKKLFIAAQAPVDATIGDFWRMVWEQESYLIVMVANLTEKNRQQCAKYWPDEQITRYGDIIVEPASFSFHSDYAIRAFDIAHIGECGPDVIPNGNGVEYANVPIVKGQFANNSRRILQYHFTNWNDYKAPECSTGLLRFMYRLRELPQFNNSPVVIHCSAGVGRTGTFISIDSMLDQCLAEDKANIFEFVCNLRRQRNLMVQSLEQYVFIYKALAEWHMYGDTDEDVRDFEDHYQRLCASNRDRAVSFNQQSSTNGSISPRVAIVSSRESMTTSNGETGLEEEFKKLERNLTTPLSSNFAAKDENLLKNRYEAAVPFDKYRVILPPTIGHADSSYINASHIKGYFFDYIAAQDPVSEGTAFDFWRMIADQNVTTVVMLSDETDWSDVEKYWPIDGSGTECHFGSERNSVNVTCVSEEHHQDFIIRNLSYSMKDNESMPANQEVVQYSYTGWPSDSIVPKSANSLMNLIEMVLQRQSSLMGSQAPIVVHCRNGSSESGIFICISLLWLRQKAEQRIDVFQTVKGLQSHRPMMFTRFEQYSFCYRALADYISKTYR.

The first 22 residues, 1 to 22 (MRINRWIWWATVILLYLRTGLA), serve as a signal peptide directing secretion. Residues 23 to 712 (ADFFRSSEEN…LLDTESSSSG (690 aa)) are Extracellular-facing. The tract at residues 32 to 53 (NDRKSSDDLDNFNSTKIEPDKP) is disordered. Residues 159 to 267 (PTKCDKRDLA…TASASDLDVT (109 aa)) form the Ig-like C2-type domain. Cys189 and Cys255 are disulfide-bonded. 2 Fibronectin type-III domains span residues 276–366 (APRQ…TKQK) and 372–502 (KEED…AQPD). Residues 713–733 (FGIFMKIILPFLLFLAFATGV) traverse the membrane as a helical segment. Topologically, residues 734-1409 (TMFFVNRKGH…LADYISKTYR (676 aa)) are cytoplasmic. 2 consecutive Tyrosine-protein phosphatase domains span residues 793-1072 (FAQE…LAEW) and 1135-1403 (LEEE…LADY). Residues Cys1013 and Cys1344 each act as phosphocysteine intermediate in the active site.

It belongs to the protein-tyrosine phosphatase family. Receptor class 2A subfamily. As to expression, expressed in muscles, hypodermis and a subset of neurons. Expressed in the AVA neurons, with high expression in the anterior half of the preanal ganglion where AVA neurons contact the PHB neurons.

Its subcellular location is the cell membrane. It localises to the synapse. The enzyme catalyses O-phospho-L-tyrosyl-[protein] + H2O = L-tyrosyl-[protein] + phosphate. Functionally, possesses an intrinsic protein tyrosine phosphatase (PTPase) activity. Regulates egl-15 activity which is required for hypodermis-mediated fluid homeostasis and protein degradation in muscle. During the formation of neuromuscular junctions at the larval stage, negatively regulates membrane protrusion from body wall muscles. Plays a role in nicotinic acetylcholine receptor (nAChR)-mediated sensitivity to nicotine. Regulates synaptic levels of nAchR subunit lev-1 in the nerve cord. Promotes the outgrowth of the quaternary dendritic branches of the PVD sensory neurons. In parallel to the sax-7/mnr-1 pathway, also controls the extension of the PVD primary branches. Acts in the netrin/DCC pathway to mediate the formation of synapses between the AVA interneurons and the PHB sensory neurons. Also required for the formation of synapses between the AVA interneurons and the VA10 motor neurons. The protein is Receptor-type tyrosine-protein phosphatase of Caenorhabditis elegans.